The following is a 268-amino-acid chain: Expansin-B3 (268 aa).

An N-terminal signal peptide occupies residues methionine 1–glycine 25. Asparagine 30 carries an N-linked (GlcNAc...) asparagine glycan. In terms of domain architecture, Expansin-like EG45 spans glycine 62 to leucine 168. Cystine bridges form between cysteine 65-cysteine 93, cysteine 96-cysteine 163, and cysteine 101-cysteine 107. One can recognise an Expansin-like CBD domain in the interval valine 181 to serine 262. N-linked (GlcNAc...) asparagine glycosylation occurs at asparagine 238.

Belongs to the expansin family. Expansin B subfamily. Expressed in roots, coleoptiles and internodes.

The protein localises to the secreted. It localises to the cell wall. It is found in the membrane. Its function is as follows. May cause loosening and extension of plant cell walls by disrupting non-covalent bonding between cellulose microfibrils and matrix glucans. No enzymatic activity has been found. May be required for rapid internodal elongation in deepwater rice during submergence. This chain is Expansin-B3 (EXPB3), found in Oryza sativa subsp. japonica (Rice).